The primary structure comprises 451 residues: Probable D-serine dehydratase (451 aa).

Residue K119 is modified to N6-(pyridoxal phosphate)lysine.

Belongs to the serine/threonine dehydratase family. DsdA subfamily. Pyridoxal 5'-phosphate serves as cofactor.

It carries out the reaction D-serine = pyruvate + NH4(+). In Acidovorax ebreus (strain TPSY) (Diaphorobacter sp. (strain TPSY)), this protein is Probable D-serine dehydratase.